Consider the following 446-residue polypeptide: Chromosomal replication initiator protein DnaA (446 aa).

Positions 1–92 (MENISDLWNS…SQAEEEIDLP (92 aa)) are domain I, interacts with DnaA modulators. Positions 93 to 109 (PSKPNAAQDDSNHLPQS) are domain II. The interval 110-326 (MLNPKYTFDT…GALIRVVAYS (217 aa)) is domain III, AAA+ region. Residues G154, G156, K157, and T158 each coordinate ATP. The segment at 327-446 (SLINKDINAD…QVEEINDILK (120 aa)) is domain IV, binds dsDNA.

It belongs to the DnaA family. As to quaternary structure, oligomerizes as a right-handed, spiral filament on DNA at oriC.

The protein resides in the cytoplasm. Plays an essential role in the initiation and regulation of chromosomal replication. ATP-DnaA binds to the origin of replication (oriC) to initiate formation of the DNA replication initiation complex once per cell cycle. Binds the DnaA box (a 9 base pair repeat at the origin) and separates the double-stranded (ds)DNA. Forms a right-handed helical filament on oriC DNA; dsDNA binds to the exterior of the filament while single-stranded (ss)DNA is stabiized in the filament's interior. The ATP-DnaA-oriC complex binds and stabilizes one strand of the AT-rich DNA unwinding element (DUE), permitting loading of DNA polymerase. After initiation quickly degrades to an ADP-DnaA complex that is not apt for DNA replication. Binds acidic phospholipids. The sequence is that of Chromosomal replication initiator protein DnaA from Bacillus cereus (strain 03BB102).